The sequence spans 993 residues: Type II inositol 1,4,5-trisphosphate 5-phosphatase (993 aa).

The PH domain maps to 22-148 (QGVLCKGDSR…PEFEWLSRHT (127 aa)). 2 stretches are compositionally biased toward basic and acidic residues: residues 149 to 163 (CAEP…REWN) and 294 to 303 (SKSDMSEKVR). Disordered stretches follow at residues 149–191 (CAEP…GLED) and 236–304 (EALE…KVRS). Residues 342 to 668 (IQNFRFFVGT…LDKMENANIP (327 aa)) form a 5-phosphatase region. Residues asparagine 355 and glutamate 383 each contribute to the Mg(2+) site. Residues glutamate 383, 459-460 (NK), 582-583 (YK), and 596-598 (KCR) each bind substrate. Positions 669–782 (SVTLSKREFC…LSVSGNYLPS (114 aa)) are ASH. One can recognise a Rho-GAP domain in the interval 821–993 (SQLENPMEIP…FIHQFLCGPL (173 aa)). Cysteine methyl ester is present on cysteine 990. The S-farnesyl cysteine moiety is linked to residue cysteine 990. Residues 991 to 993 (GPL) constitute a propeptide, removed in mature form.

The protein belongs to the inositol 1,4,5-trisphosphate 5-phosphatase type II family. Interacts with APPL1, PHETA1 and PHETA2. Interacts with several Rab GTPases, at least RAB1A, RAB2A, RAB5A, RAB6A, RAB8A, RAB9A and RAB33B; these interactions may play a dual role in targeting INPP5B to the specific membranes and stimulating its phosphatase activity. Interacts preferentially with non-phosphorylated RAB8A; phosphorylation of RAB8A on 'Thr-72' disrupts this interaction. Interacts with INPP5F. Isoprenylation at Cys-990 may be required for localization at the membrane. Post-translationally, may be proteolytically cleaved after Lys-320 as inferred from N-terminal protein sequence of the 75 kda form. In terms of tissue distribution, detected in kidney, liver, brain, lung and testis (at protein level). Detected in kidney and liver, and at lower levels in brain, lung and testis.

The protein resides in the cytoplasm. It is found in the cytosol. Its subcellular location is the endoplasmic reticulum-Golgi intermediate compartment. It localises to the early endosome membrane. The protein localises to the membrane. The protein resides in the cytoplasmic vesicle. It is found in the phagosome membrane. It catalyses the reaction a 1,2-diacyl-sn-glycero-3-phospho-(1D-myo-inositol-4,5-bisphosphate) + H2O = a 1,2-diacyl-sn-glycero-3-phospho-(1D-myo-inositol 4-phosphate) + phosphate. Functionally, hydrolyzes phosphatidylinositol 4,5-bisphosphate (PtIns(4,5)P2) and the signaling molecule phosphatidylinositol 1,4,5-trisphosphate (PtIns(1,4,5)P3), and thereby modulates cellular signaling events. This chain is Type II inositol 1,4,5-trisphosphate 5-phosphatase (Inpp5b), found in Mus musculus (Mouse).